The chain runs to 57 residues: Large ribosomal subunit protein bL33 (57 aa).

This sequence belongs to the bacterial ribosomal protein bL33 family.

The protein is Large ribosomal subunit protein bL33 of Shewanella sp. (strain MR-4).